Here is a 175-residue protein sequence, read N- to C-terminus: Protein LAZY 3 (175 aa).

A disordered region spans residues 9–39; that stretch reads RKLSGKKRVPTSDSSQEPSSPPLSKEVQGLP. An IGT motif motif is present at residues 44-50; sequence TFLAIGT.

It belongs to the LAZY family. As to expression, specifically expressed in roots. Expressed in root tips of young seedlings.

In terms of biological role, involved in the regulation of root gravitropism. Functions redundantly with LAZY2 and LAZY4 in the control of root gravitropism. Functions redundantly with LAZY1, LAZY2 and LAZY4 to control plant architecture by coupling gravity sensing to the formation of auxin gradients. The sequence is that of Protein LAZY 3 from Arabidopsis thaliana (Mouse-ear cress).